Consider the following 490-residue polypeptide: Pup--protein ligase (490 aa).

Glu-9 serves as a coordination point for Mg(2+). Arg-53 provides a ligand contact to ATP. Tyr-55 contacts Mg(2+). Asp-57 functions as the Proton acceptor in the catalytic mechanism. Glu-63 contributes to the Mg(2+) binding site. Ser-66 is an ATP binding site. Residues 160-181 form a disordered region; the sequence is KTHPNGGPVPGSTDPASSTGVP. Trp-441 contacts ATP.

This sequence belongs to the Pup ligase/Pup deamidase family. Pup-conjugating enzyme subfamily.

It carries out the reaction ATP + [prokaryotic ubiquitin-like protein]-L-glutamate + [protein]-L-lysine = ADP + phosphate + N(6)-([prokaryotic ubiquitin-like protein]-gamma-L-glutamyl)-[protein]-L-lysine.. It participates in protein degradation; proteasomal Pup-dependent pathway. It functions in the pathway protein modification; protein pupylation. Its function is as follows. Catalyzes the covalent attachment of the prokaryotic ubiquitin-like protein modifier Pup to the proteasomal substrate proteins, thereby targeting them for proteasomal degradation. This tagging system is termed pupylation. The ligation reaction involves the side-chain carboxylate of the C-terminal glutamate of Pup and the side-chain amino group of a substrate lysine. The sequence is that of Pup--protein ligase from Rothia mucilaginosa (strain DY-18) (Stomatococcus mucilaginosus).